Consider the following 162-residue polypeptide: Small ribosomal subunit protein uS9 (162 aa).

The protein belongs to the universal ribosomal protein uS9 family.

This chain is Small ribosomal subunit protein uS9, found in Methylobacterium nodulans (strain LMG 21967 / CNCM I-2342 / ORS 2060).